The chain runs to 351 residues: Transmembrane protein 236 (351 aa).

3 helical membrane passes run 9-29, 49-69, and 88-108; these read LVIF…VIME, LIVS…WVPV, and PVMM…SIAV. Residue Asn-116 is glycosylated (N-linked (GlcNAc...) asparagine). 3 helical membrane-spanning segments follow: residues 121-141, 264-284, and 301-321; these read VLPD…LIIT, NWLY…IFTP, and FVFV…VLGL.

The protein belongs to the TMEM236 family. As to expression, intestine.

The protein resides in the membrane. The chain is Transmembrane protein 236 (TMEM236) from Oryctolagus cuniculus (Rabbit).